Reading from the N-terminus, the 221-residue chain is Small ribosomal subunit protein uS5 (221 aa).

Residues 1–40 are disordered; the sequence is MMAQRNSGAPDNAGGSNDGREGGRGRRDNRDDRRGGRDNA. Residues 18 to 40 show a composition bias toward basic and acidic residues; that stretch reads DGREGGRGRRDNRDDRRGGRDNA. The 64-residue stretch at 45 to 108 folds into the S5 DRBM domain; it reads YLERVVTINR…DEARKNFFRV (64 aa).

Belongs to the universal ribosomal protein uS5 family. In terms of assembly, part of the 30S ribosomal subunit. Contacts proteins S4 and S8.

With S4 and S12 plays an important role in translational accuracy. Its function is as follows. Located at the back of the 30S subunit body where it stabilizes the conformation of the head with respect to the body. This Mycobacteroides abscessus (strain ATCC 19977 / DSM 44196 / CCUG 20993 / CIP 104536 / JCM 13569 / NCTC 13031 / TMC 1543 / L948) (Mycobacterium abscessus) protein is Small ribosomal subunit protein uS5.